Reading from the N-terminus, the 645-residue chain is Threonine--tRNA ligase (645 aa).

Positions 1 to 63 (MEQINIQFPD…ETDGSIEIVT (63 aa)) constitute a TGS domain. Residues 242 to 540 (DHRKIGKELE…LTEETKGAFP (299 aa)) form a catalytic region. Positions 336, 387, and 517 each coordinate Zn(2+).

Belongs to the class-II aminoacyl-tRNA synthetase family. In terms of assembly, homodimer. Zn(2+) is required as a cofactor.

It is found in the cytoplasm. The catalysed reaction is tRNA(Thr) + L-threonine + ATP = L-threonyl-tRNA(Thr) + AMP + diphosphate + H(+). Functionally, catalyzes the attachment of threonine to tRNA(Thr) in a two-step reaction: L-threonine is first activated by ATP to form Thr-AMP and then transferred to the acceptor end of tRNA(Thr). Also edits incorrectly charged L-seryl-tRNA(Thr). The sequence is that of Threonine--tRNA ligase from Staphylococcus aureus (strain bovine RF122 / ET3-1).